We begin with the raw amino-acid sequence, 334 residues long: Putative transport protein MTH_1211 (334 aa).

Helical transmembrane passes span 24-44 (AIVV…AYIV), 60-80 (VSII…LVFT), 84-104 (IINS…PGAG), 131-151 (YVVA…VFLS), 189-209 (VLLS…LMAA), 220-240 (AILL…GPWA), 255-275 (ILRG…DIYL), and 289-309 (MIFL…GFIV).

This sequence belongs to the autoinducer-2 exporter (AI-2E) (TC 2.A.86) family.

Its subcellular location is the cell membrane. The chain is Putative transport protein MTH_1211 from Methanothermobacter thermautotrophicus (strain ATCC 29096 / DSM 1053 / JCM 10044 / NBRC 100330 / Delta H) (Methanobacterium thermoautotrophicum).